Reading from the N-terminus, the 565-residue chain is NAD-dependent malic enzyme (565 aa).

The active-site Proton donor is Y104. Residue R157 coordinates NAD(+). The active-site Proton acceptor is K175. E246, D247, and D270 together coordinate a divalent metal cation. NAD(+) contacts are provided by D270 and N418.

This sequence belongs to the malic enzymes family. Homotetramer. It depends on Mg(2+) as a cofactor. The cofactor is Mn(2+).

The catalysed reaction is (S)-malate + NAD(+) = pyruvate + CO2 + NADH. It catalyses the reaction oxaloacetate + H(+) = pyruvate + CO2. The polypeptide is NAD-dependent malic enzyme (Escherichia coli (strain SMS-3-5 / SECEC)).